Here is a 519-residue protein sequence, read N- to C-terminus: T-box transcription factor TBX5 (519 aa).

Positions 1–46 (MADTEEAYGMPDTPVEAEPKELQCEPKQDNQLGASSKTPTSPPAAF) are disordered. A compositionally biased stretch (basic and acidic residues) spans 17-28 (AEPKELQCEPKQ). Residues 29–39 (DNQLGASSKTP) show a composition bias toward polar residues. A DNA-binding region (T-box) is located at residues 63–238 (LWLKFHEVGT…NNPFAKGFRG (176 aa)). 3 disordered regions span residues 254–282 (EYPV…RNIT), 293–312 (CENG…SAYT), and 326–372 (KRKV…TSFR). A compositionally biased stretch (polar residues) spans 262–282 (TVRQKVSSNHSPFSQETRNIT). A compositionally biased stretch (low complexity) spans 298–309 (SSTSQDLLPSSS). Positions 328 to 342 (KVSEEPAEHSYKKPY) are enriched in basic and acidic residues.

In terms of assembly, monomer. Homodimer (via the T-box); binds DNA as homodimer.

The protein localises to the nucleus. Its subcellular location is the cytoplasm. In terms of biological role, DNA-binding protein that regulates the transcription of several genes and is involved in heart development and limb pattern formation. May bind to the core DNA motif of promoters. This chain is T-box transcription factor TBX5 (tbx5), found in Xenopus laevis (African clawed frog).